Reading from the N-terminus, the 56-residue chain is Lantibiotic subtilin (56 aa).

Residues 1–24 constitute a propeptide that is removed on maturation; it reads MSKFDDFDLDVVKVSKQDSKITPQ. Trp-25 is subject to N2-succinyltryptophan; partial. The segment at residues 27–31 is a cross-link (lanthionine (Ser-Cys)); it reads SESLC. At Ser-29 the chain carries 2,3-didehydroalanine (Ser). Cross-links (beta-methyllanthionine (Thr-Cys)) lie at residues 32–35, 37–43, 47–50, and 49–52; these read TPGC, TGALQTC, TLTC, and TCNC. (Z)-2,3-didehydrobutyrine is present on Thr-42. The residue at position 55 (Ser-55) is a 2,3-didehydroalanine (Ser).

This sequence belongs to the type A lantibiotic family. Maturation of lantibiotics involves the enzymatic conversion of Thr, and Ser into dehydrated AA and the formation of thioether bonds with cysteine. This is followed by membrane translocation and cleavage of the modified precursor. Post-translationally, succinylated subtilin is 10-20 times less active than subtilin. The ratio subtilin/succinylated subtilin is about 1:2 after 24 hours growth. In terms of processing, the 2,3-didehydrobutyrine is determined to be the Z-isomer.

Functionally, lanthionine-containing peptide antibiotic (lantibiotic) active on Gram-positive bacteria. The bactericidal activity of lantibiotics is based on depolarization of energized bacterial cytoplasmic membranes, initiated by the formation of aqueous transmembrane pores. This is Lantibiotic subtilin (spaS) from Bacillus subtilis.